The chain runs to 843 residues: Molybdenum cofactor sulfurase (843 aa).

An N6-(pyridoxal phosphate)lysine modification is found at Lys241. Cys405 is an active-site residue. Residues 657–836 (QYLRKFVMPG…LMVGDIVIPS (180 aa)) enclose the MOSC domain.

The protein belongs to the class-V pyridoxal-phosphate-dependent aminotransferase family. MOCOS subfamily. It depends on pyridoxal 5'-phosphate as a cofactor.

It carries out the reaction Mo-molybdopterin + L-cysteine + AH2 = thio-Mo-molybdopterin + L-alanine + A + H2O. In terms of biological role, sulfurates the molybdenum cofactor. Sulfation of molybdenum is essential for xanthine dehydrogenase (XDH) and aldehyde oxidase (ADO) enzymes in which molybdenum cofactor is liganded by 1 oxygen and 1 sulfur atom in active form. The protein is Molybdenum cofactor sulfurase of Aspergillus fumigatus (strain CBS 144.89 / FGSC A1163 / CEA10) (Neosartorya fumigata).